A 539-amino-acid polypeptide reads, in one-letter code: Glycerophosphoinositol inositolphosphodiesterase GDPD2 (539 aa).

The Cytoplasmic segment spans residues 1–40; sequence MADSPGCCSIWARCLHCLYSCHWRKYPKQKMQTSKCDCIW. The chain crosses the membrane as a helical span at residues 41–61; that stretch reads FGLLFLTFLLSLGWLYIGLIL. At 62–83 the chain is on the extracellular side; sequence LNDLHNFNEFLFRHWGHWMDWS. A helical membrane pass occupies residues 84 to 104; it reads LIVLLVVSLLVTYASLLLLLG. The Cytoplasmic segment spans residues 105-121; it reads LLLQLCGQPLHLHSLHK. Residues 122–142 form a helical membrane-spanning segment; sequence VLLLLIVLLVAAGLVGLDIQW. The Extracellular portion of the chain corresponds to 143-154; sequence RQEWHSLRLSLQ. Residues 155–175 traverse the membrane as a helical segment; the sequence is ATAPFLHIGAVAGITLLAWPV. Residues 176-189 are Cytoplasmic-facing; it reads ADTFYRIHPRGPKV. Residues 190–210 form a helical membrane-spanning segment; the sequence is LLLLLFFGVTLVIYLMPLLFI. Residues 211–491 lie on the Extracellular side of the membrane; sequence SSPCIMKLRD…PLWLLPPQKY (281 aa). The GP-PDE domain occupies 225 to 480; it reads PGLVGHRGAP…NACQLLQQMQ (256 aa). Positions 257, 259, and 272 each coordinate a divalent metal cation. Residue Asn333 is glycosylated (N-linked (GlcNAc...) asparagine). A helical transmembrane segment spans residues 492–512; the sequence is LMIWVITDCASILLLLSIFLL. Topologically, residues 513-539 are cytoplasmic; sequence RGGCAKRNRTGLETAVLLTKINNFASE.

This sequence belongs to the glycerophosphoryl diester phosphodiesterase family. Ca(2+) serves as cofactor. Detected in spleen, femur and calvaria.

Its subcellular location is the cell membrane. It localises to the cytoplasm. It is found in the cytoskeleton. It carries out the reaction sn-glycero-3-phospho-1D-myo-inositol + H2O = 1D-myo-inositol 1-phosphate + glycerol + H(+). Functionally, has glycerophosphoinositol inositolphosphodiesterase activity and specifically hydrolyzes glycerophosphoinositol, with no activity for other substrates such as glycerophosphoinositol 4-phosphate, glycerophosphocholine, glycerophosphoethanolamine, and glycerophosphoserine. Accelerates the program of osteoblast differentiation and growth. May play a role in remodeling of the actin cytoskeleton. This is Glycerophosphoinositol inositolphosphodiesterase GDPD2 (Gdpd2) from Mus musculus (Mouse).